We begin with the raw amino-acid sequence, 109 residues long: T cell receptor alpha variable 26-2 (109 aa).

The first 19 residues, 1–19 (MKLVTSITVLLSLGIMGDA), serve as a signal peptide directing secretion. The 90-residue stretch at 20-109 (KTTQPNSMES…AAVYYCILRD (90 aa)) folds into the Ig-like domain. A disulfide bridge connects residues Cys39 and Cys105. The N-linked (GlcNAc...) asparagine glycan is linked to Asn40.

Alpha-beta TR is a heterodimer composed of an alpha and beta chain; disulfide-linked. The alpha-beta TR is associated with the transmembrane signaling CD3 coreceptor proteins to form the TR-CD3 (TcR or TCR). The assembly of alpha-beta TR heterodimers with CD3 occurs in the endoplasmic reticulum where a single alpha-beta TR heterodimer associates with one CD3D-CD3E heterodimer, one CD3G-CD3E heterodimer and one CD247 homodimer forming a stable octameric structure. CD3D-CD3E and CD3G-CD3E heterodimers preferentially associate with TR alpha and TR beta chains, respectively. The association of the CD247 homodimer is the last step of TcR assembly in the endoplasmic reticulum and is required for transport to the cell surface.

It localises to the cell membrane. In terms of biological role, v region of the variable domain of T cell receptor (TR) alpha chain that participates in the antigen recognition. Alpha-beta T cell receptors are antigen specific receptors which are essential to the immune response and are present on the cell surface of T lymphocytes. Recognize peptide-major histocompatibility (MH) (pMH) complexes that are displayed by antigen presenting cells (APC), a prerequisite for efficient T cell adaptive immunity against pathogens. Binding of alpha-beta TR to pMH complex initiates TR-CD3 clustering on the cell surface and intracellular activation of LCK that phosphorylates the ITAM motifs of CD3G, CD3D, CD3E and CD247 enabling the recruitment of ZAP70. In turn ZAP70 phosphorylates LAT, which recruits numerous signaling molecules to form the LAT signalosome. The LAT signalosome propagates signal branching to three major signaling pathways, the calcium, the mitogen-activated protein kinase (MAPK) kinase and the nuclear factor NF-kappa-B (NF-kB) pathways, leading to the mobilization of transcription factors that are critical for gene expression and essential for T cell growth and differentiation. The T cell repertoire is generated in the thymus, by V-(D)-J rearrangement. This repertoire is then shaped by intrathymic selection events to generate a peripheral T cell pool of self-MH restricted, non-autoaggressive T cells. Post-thymic interaction of alpha-beta TR with the pMH complexes shapes TR structural and functional avidity. The protein is T cell receptor alpha variable 26-2 of Homo sapiens (Human).